Reading from the N-terminus, the 246-residue chain is tRNA (guanine-N(1)-)-methyltransferase (246 aa).

Residues G114 and 134 to 139 (IGDYIL) contribute to the S-adenosyl-L-methionine site.

This sequence belongs to the RNA methyltransferase TrmD family. In terms of assembly, homodimer.

It localises to the cytoplasm. The enzyme catalyses guanosine(37) in tRNA + S-adenosyl-L-methionine = N(1)-methylguanosine(37) in tRNA + S-adenosyl-L-homocysteine + H(+). Functionally, specifically methylates guanosine-37 in various tRNAs. This is tRNA (guanine-N(1)-)-methyltransferase from Coxiella burnetii (strain CbuK_Q154) (Coxiella burnetii (strain Q154)).